Consider the following 546-residue polypeptide: MSKNPGRILIFDTTLRDGEQSPGASLNLEEKLAIAHQLARLGVDVIEAGFPFASPGDFKAVNKIASAVGKEHGPTICGLARASKGDIKACYEAVSPAPKKRIHTFIATSDIHLKHKLKKSRKDVLQIVPEMVNYAKSLVDDIEFSCEDASRSDPDFLYEVIQLAISAGATTINIPDTVGFTTPSEFGNLIADINKNVPNIDEAVISVHGHNDLGLAVANFLEAVKNGARQLECTINGIGERAGNASLEELVMALHVRKSFFNSFFKRNPDSPTPLTAIRTEEITKTSRLVSNLTGMTVQPNKAIVGANAFAHESGIHQDGVLKNRLTYEIIDAKTVGLSDNKISLGKLSGRSAVRARLEEMGYDLSREDLNDAFARFKDLADRKREITDRDLEAIVSEQVQLPEAKFQLSLVQVSCGNASKPTATISLLNTEDNTEDTAVSIGTGPVDAVCEALNKLAKVPNELIEFSVKSVTEGIDALGEVTIRIRRDNKIYSGHSADTDVVVAAANAYINALNRLVFSEKKNSIHPQFDNLENSNNTYISNPAN.

One can recognise a Pyruvate carboxyltransferase domain in the interval 8–271 (ILIFDTTLRD…NSFFKRNPDS (264 aa)). Mn(2+)-binding residues include Asp17, His208, His210, and Asn244. The segment at 408–546 (QLSLVQVSCG…NNTYISNPAN (139 aa)) is regulatory domain.

It belongs to the alpha-IPM synthase/homocitrate synthase family. LeuA type 1 subfamily. As to quaternary structure, homodimer. Requires Mn(2+) as cofactor.

The protein localises to the cytoplasm. The catalysed reaction is 3-methyl-2-oxobutanoate + acetyl-CoA + H2O = (2S)-2-isopropylmalate + CoA + H(+). Its pathway is amino-acid biosynthesis; L-leucine biosynthesis; L-leucine from 3-methyl-2-oxobutanoate: step 1/4. In terms of biological role, catalyzes the condensation of the acetyl group of acetyl-CoA with 3-methyl-2-oxobutanoate (2-ketoisovalerate) to form 3-carboxy-3-hydroxy-4-methylpentanoate (2-isopropylmalate). The protein is 2-isopropylmalate synthase of Prochlorococcus marinus (strain MIT 9301).